A 1315-amino-acid polypeptide reads, in one-letter code: DNA-directed RNA polymerase subunit beta' (1315 aa).

Residues Cys60, Cys62, Cys75, and Cys78 each coordinate Zn(2+). The Mg(2+) site is built by Asp535, Asp537, and Asp539. The Zn(2+) site is built by Cys890, Cys967, Cys974, and Cys977.

It belongs to the RNA polymerase beta' chain family. The RNAP catalytic core consists of 2 alpha, 1 beta, 1 beta' and 1 omega subunit. When a sigma factor is associated with the core the holoenzyme is formed, which can initiate transcription. Mg(2+) is required as a cofactor. The cofactor is Zn(2+).

The enzyme catalyses RNA(n) + a ribonucleoside 5'-triphosphate = RNA(n+1) + diphosphate. Functionally, DNA-dependent RNA polymerase catalyzes the transcription of DNA into RNA using the four ribonucleoside triphosphates as substrates. The chain is DNA-directed RNA polymerase subunit beta' from Mycobacterium sp. (strain MCS).